Consider the following 295-residue polypeptide: MNGLFDTYHIRRAFSRAAHSYDTNAVLQHEVEQRLLESLDYLGDRIPRVILDVGAGTGRASIAMKKRWPKAQVIALDQAMPMLQEARKRSHWWNPLALIYGDARTLPVADASVDVIFSNLCLQWIEDLPTVFAGFRQALRPGGLLLCSLFGPDTLIELRQAFAQADAVPHISPFPSMPQCGDALVLAHFQNPVLDRDLFTLTYDDLSALMRSLRAIGATNALQERRTTLTGRGRFAATAAAYETLRNADNKLPSSWEVIYACAWAPTSEPMTRENNHEIASIPINSIPIRRRNSS.

This sequence belongs to the methyltransferase superfamily.

The catalysed reaction is malonyl-[ACP] + S-adenosyl-L-methionine = malonyl-[ACP] methyl ester + S-adenosyl-L-homocysteine. It functions in the pathway cofactor biosynthesis; biotin biosynthesis. Converts the free carboxyl group of a malonyl-thioester to its methyl ester by transfer of a methyl group from S-adenosyl-L-methionine (SAM). It allows to synthesize pimeloyl-ACP via the fatty acid synthetic pathway. This is Malonyl-[acyl-carrier protein] O-methyltransferase from Xylella fastidiosa (strain M23).